The following is a 261-amino-acid chain: Proliferating cell nuclear antigen (261 aa).

The interaction with NUDT15 stretch occupies residues 7-100 (VQGSILKKVL…RAEDNADTLA (94 aa)). Lys14, Lys77, and Lys80 each carry N6-acetyllysine. The DNA-binding element occupies 61–80 (RCDRNLAMGVNLTSMSKILK). A disulfide bridge links Cys135 with Cys162. Lys164 is covalently cross-linked (Glycyl lysine isopeptide (Lys-Gly) (interchain with G-Cter in SUMO2); alternate). Residue Lys164 forms a Glycyl lysine isopeptide (Lys-Gly) (interchain with G-Cter in ubiquitin); alternate linkage. The residue at position 211 (Tyr211) is a Phosphotyrosine; by EGFR. Lys248 bears the N6-acetyllysine mark. Lys254 participates in a covalent cross-link: Glycyl lysine isopeptide (Lys-Gly) (interchain with G-Cter in SUMO2).

This sequence belongs to the PCNA family. Homotrimer. Interacts with p300/EP300; the interaction occurs on chromatin in UV-irradiated damaged cells. Interacts with CREBBP (via transactivation domain and C-terminus); the interaction occurs on chromatin in UV-irradiated damaged cells. Directly interacts with POLD1, POLD3 and POLD4 subunits of the DNA polymerase delta complex, POLD3 being the major interacting partner; the interaction with POLD3 is inhibited by CDKN1A/p21(CIP1). Forms a complex with activator 1 heteropentamer in the presence of ATP. Interacts with EXO1, POLH, POLK, DNMT1, ERCC5, FEN1, CDC6 and POLDIP2. Interacts with POLB. Interacts with APEX2; this interaction is triggered by reactive oxygen species and increased by misincorporation of uracil in nuclear DNA. Forms a ternary complex with DNTTIP2 and core histone. Interacts with KCTD10 and PPP1R15A. Interacts with SMARCA5/SNF2H. Interacts with BAZ1B/WSTF; the interaction is direct and is required for BAZ1B/WSTF binding to replication foci during S phase. Interacts with HLTF and SHPRH. Interacts with NUDT15; this interaction is disrupted in response to UV irradiation and acetylation. Interacts with CDKN1A/p21(CIP1) and CDT1; interacts via their PIP-box which also recruits the DCX(DTL) complex. The interaction with CDKN1A inhibits POLD3 binding. Interacts with DDX11. Interacts with EGFR; positively regulates PCNA. Interacts with PARPBP. Interacts (when ubiquitinated) with SPRTN; leading to enhance RAD18-mediated PCNA ubiquitination. Interacts (when polyubiquitinated) with ZRANB3. Interacts with SMARCAD1. Interacts with CDKN1C. Interacts with PCLAF (via PIP-box). Interacts with RTEL1 (via PIP-box); the interaction is direct and essential for the suppression of telomere fragility. Interacts with FAM111A (via PIP-box); the interaction is direct and required for PCNA loading on chromatin binding. Interacts with LIG1. Interacts with SETMAR. Interacts with ANKRD17. Interacts with FBXO18/FBH1 (via PIP-box); the interaction recruits the DCX(DTL) complex and promotes ubiquitination and degradation of FBXO18/FBH1. Interacts with POLN. Interacts with SDE2 (via PIP-box); the interaction is direct and prevents ultraviolet light induced monoubiquitination. Component of the replisome complex composed of at least DONSON, MCM2, MCM7, PCNA and TICRR; interaction at least with PCNA occurs during DNA replication. Interacts with MAPK15; the interaction is chromatin binding dependent and prevents MDM2-mediated PCNA destruction by inhibiting the association of PCNA with MDM2. Interacts with PARP10 (via PIP-box). Interacts with DDI2. Interacts with HMCES (via PIP-box). Interacts with TRAIP (via PIP-box). Interacts with UHRF2. Interacts with ALKBH2; this interaction is enhanced during the S-phase of the cell cycle. Interacts with ATAD5; the interaction promotes USP1-mediated PCNA deubiquitination. Interacts with DNA damage up-regulated protein DDUP. Interacts (when phosphorylated) with GRB2. Interacts with ANG. Interacts with nuclear UNG (isoform 2); this interaction mediates UNG recruitment to S-phase replication foci. Interacts with ERCC6L2 (via an atypical PIP-box); this interaction facilitates cenrtomeric localization of ERCC6L2. In terms of assembly, (Microbial infection) Interacts with herpes virus 8 protein LANA1. In terms of processing, phosphorylated. Phosphorylation at Tyr-211 by EGFR stabilizes chromatin-associated PCNA. Post-translationally, acetylated by CREBBP and p300/EP300; preferentially acetylated by CREBBP on Lys-80, Lys-13 and Lys-14 and on Lys-77 by p300/EP300 upon loading on chromatin in response to UV irradiation. Lysine acetylation disrupts association with chromatin, hence promoting PCNA ubiquitination and proteasomal degradation in response to UV damage in a CREBBP- and EP300-dependent manner. Acetylation disrupts interaction with NUDT15 and promotes degradation. Ubiquitinated. Following DNA damage, can be either monoubiquitinated to stimulate direct bypass of DNA lesions by specialized DNA polymerases or polyubiquitinated to promote recombination-dependent DNA synthesis across DNA lesions by template switching mechanisms. Following induction of replication stress, monoubiquitinated by the UBE2B-RAD18 complex on Lys-164, leading to recruit translesion (TLS) polymerases, which are able to synthesize across DNA lesions in a potentially error-prone manner. An error-free pathway also exists and requires non-canonical polyubiquitination on Lys-164 through 'Lys-63' linkage of ubiquitin moieties by the E2 complex UBE2N-UBE2V2 and the E3 ligases, HLTF, RNF8 and SHPRH. This error-free pathway, also known as template switching, employs recombination mechanisms to synthesize across the lesion, using as a template the undamaged, newly synthesized strand of the sister chromatid. Monoubiquitination at Lys-164 also takes place in undamaged proliferating cells, and is mediated by the DCX(DTL) complex, leading to enhance PCNA-dependent translesion DNA synthesis. Sumoylated during S phase. In terms of processing, methylated on glutamate residues by ARMT1/C6orf211.

It is found in the nucleus. Auxiliary protein of DNA polymerase delta and epsilon, is involved in the control of eukaryotic DNA replication by increasing the polymerase's processibility during elongation of the leading strand. Induces a robust stimulatory effect on the 3'-5' exonuclease and 3'-phosphodiesterase, but not apurinic-apyrimidinic (AP) endonuclease, APEX2 activities. Has to be loaded onto DNA in order to be able to stimulate APEX2. Plays a key role in DNA damage response (DDR) by being conveniently positioned at the replication fork to coordinate DNA replication with DNA repair and DNA damage tolerance pathways. Acts as a loading platform to recruit DDR proteins that allow completion of DNA replication after DNA damage and promote postreplication repair: Monoubiquitinated PCNA leads to recruitment of translesion (TLS) polymerases, while 'Lys-63'-linked polyubiquitination of PCNA is involved in error-free pathway and employs recombination mechanisms to synthesize across the lesion. The sequence is that of Proliferating cell nuclear antigen (PCNA) from Homo sapiens (Human).